A 131-amino-acid chain; its full sequence is Holin-like protein CidA (131 aa).

Transmembrane regions (helical) follow at residues 4-24 (VQLI…TYIG), 30-50 (IFHL…LLLQ), 65-85 (FLLK…MDVA), and 88-108 (ITLN…IVAL).

It belongs to the CidA/LrgA family. CidA subfamily.

Its subcellular location is the cell membrane. Increases the activity of extracellular murein hydrolases possibly by mediating their export via hole formation. Inhibited by the antiholin-like proteins LrgAB. In an unstressed cell, the LrgAB products probably inhibit the function of the CidAB proteins. When a cell is stressed by the addition of antibiotics or by other factors in the environment, the CidAB proteins possibly oligomerize within the bacterial cell membrane, creating lesions that disrupt the proton motive force, which in turn results in loss of cell viability. These lesions are also hypothesized to regulate the subsequent cell lysis by either allowing the murein hydrolases access to the cell wall substrate and/or regulating their activity by a possible change in the cell wall pH that results from loss of membrane potential. The protein is Holin-like protein CidA of Staphylococcus aureus (strain Mu3 / ATCC 700698).